Consider the following 838-residue polypeptide: Transient receptor potential cation channel subfamily V member 1 (838 aa).

2 disordered regions span residues 1 to 63 and 86 to 109; these read MEQR…PLDC and RPGD…EKPP. The Cytoplasmic portion of the chain corresponds to 1–432; that stretch reads MEQRASLDSE…QDKWDRFVKR (432 aa). The stretch at 110–138 is one ANK 1 repeat; that stretch reads RLYDRRSIFDAVAQSNCQELESLLPFLQR. Arg115 is a binding site for ATP. Ser116 carries the phosphoserine; by PKA and PKD modification. Phosphothreonine; by PKA; in vitro is present on Thr144. Residues 153 to 185 form an ANK 2 repeat; it reads TGKTCLLKAMLNLHNGQNDTIALLLDVARKTDS. Residues Lys155, Lys160, Asn164, 199-202, and 210-211 contribute to the ATP site; these read YKGQ and ER. ANK repeat units lie at residues 203-228, 249-276, 285-321, and 335-358; these read TALH…ADVQ, ELPL…QPAD, NTVL…KLHP, and TPLA…REIH. Residue Thr370 is modified to Phosphothreonine; by PKA; in vitro. An ANK 7 repeat occupies 393–415; it reads NSVLEVIAYSSSETPNRHDMLLV. Residues 433–453 form a helical membrane-spanning segment; sequence IFYFNFFVYCLYMIIFTAAAY. The Extracellular portion of the chain corresponds to 454-471; sequence YRPVEGLPPYKLKNTVGD. Residues 472–497 form a helical membrane-spanning segment; sequence YFRVTGEILSVSGGVYFFFRGIQYFL. The Cytoplasmic segment spans residues 498 to 510; the sequence is QRRPSLKSLFVDS. At Ser502 the chain carries Phosphoserine; by PKC/PRKCE. 511–512 contacts resiniferatoxin; that stretch reads YS. The chain crosses the membrane as a helical span at residues 511-531; that stretch reads YSEILFFVQSLFMLVSVVLYF. Over 532–535 the chain is Extracellular; that stretch reads SQRK. The helical transmembrane segment at 536 to 556 threads the bilayer; that stretch reads EYVASMVFSLAMGWTNMLYYT. Resiniferatoxin contacts are provided by Thr550 and Arg557. Residues 557-571 lie on the Cytoplasmic side of the membrane; the sequence is RGFQQMGIYAVMIEK. The chain crosses the membrane as a helical span at residues 572–599; it reads MILRDLCRFMFVYLVFLFGFSTAVVTLI. Over 600–626 the chain is Extracellular; it reads EDGKNNSLPMESTPHKCRGSACKPGNS. N-linked (GlcNAc...) asparagine glycosylation is present at Asn604. Positions 627-649 form an intramembrane region, pore-forming; the sequence is YNSLYSTCLELFKFTIGMGDLEF. A Na(+)-binding site is contributed by Gly643. Residues 643 to 646 carry the Selectivity filter motif; that stretch reads GMGD. Asp646 is a Ca(2+) binding site. Topologically, residues 650 to 657 are extracellular; it reads TENYDFKA. The chain crosses the membrane as a helical span at residues 658-686; sequence VFIILLLAYVILTYILLLNMLIALMGETV. The AD stretch occupies residues 684–712; sequence ETVNKIAQESKNIWKLQRAITILDTEKSF. Over 687–838 the chain is Cytoplasmic; it reads NKIAQESKNI…FKDSMVPGEK (152 aa). Residue Thr704 is modified to Phosphothreonine. An interaction with calmodulin region spans residues 767–801; sequence EGVKRTLSFSLRSGRVSGRNWKNFALVPLLRDAST. The residue at position 774 (Ser774) is a Phosphoserine; by PKA; in vitro. The required for PIP2-mediated channel inhibition stretch occupies residues 777 to 792; that stretch reads LRSGRVSGRNWKNFAL. Ser800 is subject to Phosphoserine; by PKC/PRKCE and PKC/PRKCZ. Phosphoserine; by PKA; in vitro is present on Ser820.

It belongs to the transient receptor (TC 1.A.4) family. TrpV subfamily. TRPV1 sub-subfamily. As to quaternary structure, homotetramer. Interacts with PIRT. May also form a heteromeric channel with TRPV3. Interacts with CALM, PRKCM and CSK. Interacts with PRKCG and NTRK1, probably by forming a trimeric complex. Interacts with the Scolopendra mutilans RhTx toxin. Interacts with the spider Tau-theraphotoxin-Hs1a. Interacts with TMEM100. Interacts with PACS2. In terms of processing, phosphorylation by PKA reverses capsaicin-induced dephosphorylation at multiple sites, probably including Ser-116 as a major phosphorylation site. Phosphorylation by CAMKII seems to regulate binding to vanilloids. Phosphorylated and modulated by PRKCE, PRKCM and probably PRKCZ. Dephosphorylation by calcineurin seems to lead to receptor desensitization and phosphorylation by CAMKII recovers activity. As to expression, predominantly expressed in trigeminal and dorsal root sensory ganglia. Expressed also in hippocampus, cortex, cerebellum, olfactory bulb, mesencephalon and hindbrain. High expression in the cell bodies and dendrites of neurons in the hippocampus and in the cortex. In the brain detected also in astrocytes and pericytes (at protein level). Isoform 1 and isoform 3 are expressed in brain and peripheral blood mononuclear cells.

The protein localises to the postsynaptic cell membrane. It is found in the cell projection. Its subcellular location is the dendritic spine membrane. It localises to the cell membrane. The enzyme catalyses Ca(2+)(in) = Ca(2+)(out). It carries out the reaction Mg(2+)(in) = Mg(2+)(out). The catalysed reaction is Na(+)(in) = Na(+)(out). It catalyses the reaction K(+)(in) = K(+)(out). Channel activity is activated via the interaction with PIRT and phosphatidylinositol 4,5-bisphosphate (PIP2). Both PIRT and PIP2 are required to activate channel activity. The channel is sensitized by ATP binding. Repeated stimulation with capsaicin gives rise to progressively smaller responses, due to desensitization. This desensitization is triggered by the influx of calcium ions and is inhibited by elevated ATP levels. Ca(2+) and CALM displace ATP from its binding site and trigger a conformation change that leads to a closed, desensitized channel. Intracellular PIP2 inhibits desensitization. The double-knot toxin (DkTx) from the Chinese earth tiger tarantula activates the channel and traps it in an open conformation. The Scolopendra mutilans RhTx toxin potentiates the heat activation pathway mediated by this channel by binding to the charge-rich outer pore region (in an activated state). Functionally, non-selective calcium permeant cation channel involved in detection of noxious chemical and thermal stimuli. Seems to mediate proton influx and may be involved in intracellular acidosis in nociceptive neurons. Involved in mediation of inflammatory pain and hyperalgesia. Sensitized by a phosphatidylinositol second messenger system activated by receptor tyrosine kinases, which involves PKC isozymes and PCL. Activation by vanilloids, like capsaicin, and temperatures higher than 42 degrees Celsius. Upon activation, exhibits a time- and Ca(2+)-dependent outward rectification, followed by a long-lasting refractory state. Mild extracellular acidic pH (6.5) potentiates channel activation by noxious heat and vanilloids, whereas acidic conditions (pH &lt;6) directly activate the channel. Can be activated by endogenous compounds, including 12-hydroperoxytetraenoic acid and bradykinin. Acts as ionotropic endocannabinoid receptor with central neuromodulatory effects. Triggers a form of long-term depression (TRPV1-LTD) mediated by the endocannabinoid anandamine in the hippocampus and nucleus accumbens by affecting AMPA receptors endocytosis. Does not display channel activity in response to noxious chemical compounds, such as capsaicin and the vanilloid resiniferatoxin. Channel activity is not elicited by mildly acidic extracellular pH, and only slight channel activity is observed in response to noxiuos heat stimuli. This Rattus norvegicus (Rat) protein is Transient receptor potential cation channel subfamily V member 1 (Trpv1).